Here is a 121-residue protein sequence, read N- to C-terminus: Small ribosomal subunit protein bS21m (121 aa).

A mitochondrion-targeting transit peptide spans 1–14; that stretch reads MNSSYFPGVLGVRW.

Belongs to the bacterial ribosomal protein bS21 family. Component of the mitochondrial small ribosomal subunit (mt-SSU). Mature yeast 74S mitochondrial ribosomes consist of a small (37S) and a large (54S) subunit. The 37S small subunit contains a 15S ribosomal RNA (15S mt-rRNA) and at least 32 different proteins. The 54S large subunit contains a 21S rRNA (21S mt-rRNA) and at least 45 different proteins.

The protein localises to the mitochondrion. In terms of biological role, component of the mitochondrial ribosome (mitoribosome), a dedicated translation machinery responsible for the synthesis of mitochondrial genome-encoded proteins, including at least some of the essential transmembrane subunits of the mitochondrial respiratory chain. The mitoribosomes are attached to the mitochondrial inner membrane and translation products are cotranslationally integrated into the membrane. The sequence is that of Small ribosomal subunit protein bS21m (mrp21) from Schizosaccharomyces pombe (strain 972 / ATCC 24843) (Fission yeast).